The chain runs to 600 residues: Zinc finger and BTB domain-containing protein 46 (600 aa).

One can recognise a BTB domain in the interval C31 to S99. A disordered region spans residues R173–G222. Residues G197–G207 show a composition bias toward basic and acidic residues. K229 is covalently cross-linked (Glycyl lysine isopeptide (Lys-Gly) (interchain with G-Cter in SUMO2)). Position 234 is a phosphoserine (S234). The segment at P235–T278 is disordered. Polar residues predominate over residues L243 to G259. C2H2-type zinc fingers lie at residues F418–H436 and Y446–H468. Residues L513 to S600 form a disordered region. Residues Y533–D555 show a composition bias toward acidic residues. Composition is skewed to basic and acidic residues over residues V556–D574 and E591–S600.

Sumoylated. Desumoylation by DESI1 reverses transcriptional repression activity.

The protein localises to the nucleus. In terms of biological role, functions as a transcriptional repressor for PRDM1. The chain is Zinc finger and BTB domain-containing protein 46 (Zbtb46) from Mus musculus (Mouse).